The following is a 176-amino-acid chain: Oleosin Ara h 14.0102 (176 aa).

Ala-2 bears the N-acetylalanine; alternate mark. A run of 2 helical transmembrane segments spans residues Gly-61–Ala-81 and Phe-87–Leu-107. The disordered stretch occupies residues Lys-156 to Ser-176.

This sequence belongs to the oleosin family. Homodimer. Forms oligomers. In terms of tissue distribution, expressed in seeds (at protein level). Not expressed in leaves.

The protein localises to the lipid droplet. It localises to the membrane. Functionally, may have a structural role to stabilize the lipid body during desiccation of the seed by preventing coalescence of the oil. Probably interacts with both lipid and phospholipid moieties of lipid bodies. May also provide recognition signals for specific lipase anchorage in lipolysis during seedling growth. The chain is Oleosin Ara h 14.0102 from Arachis hypogaea (Peanut).